The chain runs to 443 residues: Protein UIP5 (443 aa).

Residues 1–27 (MSRDVRAEKLAISLLILSLFLIFQLVA) form the signal peptide. Topologically, residues 28–398 (EIYLNNGDQY…LFKVVLTIWH (371 aa)) are perinuclear space. Residues 399–420 (YSEILLLIMGIYLFSACIRVFQ) traverse the membrane as a helical segment. Residues 421 to 443 (RRFKKIRSRRKRAGSHSVGLLPM) are Cytoplasmic-facing.

The protein resides in the nucleus membrane. This chain is Protein UIP5 (UIP5), found in Saccharomyces cerevisiae (strain ATCC 204508 / S288c) (Baker's yeast).